Consider the following 60-residue polypeptide: Metallothionein B (60 aa).

The beta stretch occupies residues 1–28; the sequence is MDPCECTKSGTCNCGGSCTCTNCSCTSC. Cys-4, Cys-6, Cys-12, Cys-14, Cys-18, Cys-20, Cys-23, Cys-25, Cys-28, Cys-32, Cys-33, Cys-35, Cys-36, Cys-40, Cys-43, Cys-47, Cys-49, Cys-54, Cys-58, and Cys-59 together coordinate a divalent metal cation. An alpha region spans residues 29–60; it reads KKSCCPCCPSGCTKCASGCVCKGKTCDTSCCQ.

Belongs to the metallothionein superfamily. Type 1 family.

Its function is as follows. Metallothioneins have a high content of cysteine residues that bind various heavy metals. The protein is Metallothionein B (mtb) of Chaenocephalus aceratus (Blackfin icefish).